Reading from the N-terminus, the 174-residue chain is Ubiquinone biosynthesis accessory factor UbiT (174 aa).

The 89-residue stretch at 45 to 133 (LDDGELEFLE…LGLYVKNLMD (89 aa)) folds into the SCP2 domain.

This sequence belongs to the UbiT family.

It functions in the pathway cofactor biosynthesis; ubiquinone biosynthesis. In terms of biological role, required for O(2)-independent ubiquinone (coenzyme Q) biosynthesis. Likely functions as an accessory factor. The chain is Ubiquinone biosynthesis accessory factor UbiT from Escherichia coli O157:H7.